We begin with the raw amino-acid sequence, 61 residues long: Metallothionein-1B (61 aa).

Positions 1–29 (MDPNCSCPTSGSCSCAGSCTCKACRCPSC) are beta. Residues Cys-5, Cys-7, Cys-13, Cys-15, Cys-19, Cys-21, Cys-24, Cys-26, Cys-29, Cys-33, Cys-34, Cys-36, Cys-37, Cys-41, Cys-44, Cys-48, Cys-50, Cys-57, Cys-59, and Cys-60 each contribute to the a divalent metal cation site. The tract at residues 30–61 (KKSCCSCCPVGCAKCAQGCVCKGASDKCSCCA) is alpha.

This sequence belongs to the metallothionein superfamily. Type 1 family.

Its function is as follows. Metallothioneins have a high content of cysteine residues that bind various heavy metals; these proteins are transcriptionally regulated by both heavy metals and glucocorticoids. In Ovis aries (Sheep), this protein is Metallothionein-1B (MT1B).